A 241-amino-acid chain; its full sequence is Orotidine 5'-phosphate decarboxylase (241 aa).

Substrate contacts are provided by residues Asp-16, Lys-37, 64–73 (DLKFHDIPTT), Thr-128, Arg-190, Gln-199, Gly-219, and Arg-220. Residue Lys-66 is the Proton donor of the active site.

This sequence belongs to the OMP decarboxylase family. Type 1 subfamily. As to quaternary structure, homodimer.

It carries out the reaction orotidine 5'-phosphate + H(+) = UMP + CO2. Its pathway is pyrimidine metabolism; UMP biosynthesis via de novo pathway; UMP from orotate: step 2/2. Functionally, catalyzes the decarboxylation of orotidine 5'-monophosphate (OMP) to uridine 5'-monophosphate (UMP). This is Orotidine 5'-phosphate decarboxylase from Prochlorococcus marinus (strain NATL2A).